Reading from the N-terminus, the 428-residue chain is Cell number regulator 13 (428 aa).

A compositionally biased stretch (basic and acidic residues) spans 233–280 (PEKETNVKAPEKKGSNYSESKGETAKSFDDDDDYPKKQNGDYPKKQKD). The tract at residues 233–290 (PEKETNVKAPEKKGSNYSESKGETAKSFDDDDDYPKKQNGDYPKKQKDTCSTQRCSSQ) is disordered. The segment covering 281-290 (TCSTQRCSSQ) has biased composition (polar residues). The helical transmembrane segment at 354-370 (IMAYSLILSCCCYTCCV) threads the bilayer.

Expressed in roots, coleoptiles, leaves, stalks, apical meristems, immature ears, embryos, endosperm, pericarp, silks and tassel spikelets. Not detected in pollen.

It is found in the membrane. The chain is Cell number regulator 13 (CNR13) from Zea mays (Maize).